We begin with the raw amino-acid sequence, 397 residues long: S-adenosylmethionine synthase (397 aa).

Position 16 (His-16) interacts with ATP. A Mg(2+)-binding site is contributed by Asp-18. Glu-44 contacts K(+). 2 residues coordinate L-methionine: Glu-57 and Gln-100. A flexible loop region spans residues 100–110 (QSPDIAQGVNE). ATP contacts are provided by residues 175 to 177 (DAK), 242 to 243 (RF), Asp-251, 257 to 258 (RK), Ala-274, and Lys-278. Asp-251 contributes to the L-methionine binding site. Position 282 (Lys-282) interacts with L-methionine.

The protein belongs to the AdoMet synthase family. In terms of assembly, homotetramer; dimer of dimers. It depends on Mg(2+) as a cofactor. The cofactor is K(+).

It localises to the cytoplasm. It catalyses the reaction L-methionine + ATP + H2O = S-adenosyl-L-methionine + phosphate + diphosphate. It participates in amino-acid biosynthesis; S-adenosyl-L-methionine biosynthesis; S-adenosyl-L-methionine from L-methionine: step 1/1. Functionally, catalyzes the formation of S-adenosylmethionine (AdoMet) from methionine and ATP. The overall synthetic reaction is composed of two sequential steps, AdoMet formation and the subsequent tripolyphosphate hydrolysis which occurs prior to release of AdoMet from the enzyme. In Streptococcus thermophilus (strain CNRZ 1066), this protein is S-adenosylmethionine synthase.